We begin with the raw amino-acid sequence, 355 residues long: tRNA (guanine-N(1)-)-methyltransferase (355 aa).

Residues Gly-109 and 129-134 (IGDYVL) each bind S-adenosyl-L-methionine.

This sequence belongs to the RNA methyltransferase TrmD family. In terms of assembly, homodimer.

The protein resides in the cytoplasm. The catalysed reaction is guanosine(37) in tRNA + S-adenosyl-L-methionine = N(1)-methylguanosine(37) in tRNA + S-adenosyl-L-homocysteine + H(+). In terms of biological role, specifically methylates guanosine-37 in various tRNAs. This chain is tRNA (guanine-N(1)-)-methyltransferase, found in Chlamydia abortus (strain DSM 27085 / S26/3) (Chlamydophila abortus).